The chain runs to 255 residues: 5-oxoprolinase subunit A (255 aa).

It belongs to the LamB/PxpA family. As to quaternary structure, forms a complex composed of PxpA, PxpB and PxpC.

It carries out the reaction 5-oxo-L-proline + ATP + 2 H2O = L-glutamate + ADP + phosphate + H(+). Catalyzes the cleavage of 5-oxoproline to form L-glutamate coupled to the hydrolysis of ATP to ADP and inorganic phosphate. In Thermococcus onnurineus (strain NA1), this protein is 5-oxoprolinase subunit A.